A 252-amino-acid chain; its full sequence is Trans-aconitate 2-methyltransferase (252 aa).

This sequence belongs to the methyltransferase superfamily. Tam family.

Its subcellular location is the cytoplasm. It catalyses the reaction trans-aconitate + S-adenosyl-L-methionine = (E)-3-(methoxycarbonyl)pent-2-enedioate + S-adenosyl-L-homocysteine. In terms of biological role, catalyzes the S-adenosylmethionine monomethyl esterification of trans-aconitate. The sequence is that of Trans-aconitate 2-methyltransferase from Escherichia coli (strain UTI89 / UPEC).